The primary structure comprises 301 residues: 33 kDa chaperonin (301 aa).

Disulfide bonds link cysteine 239–cysteine 241 and cysteine 272–cysteine 275.

Belongs to the HSP33 family. Under oxidizing conditions two disulfide bonds are formed involving the reactive cysteines. Under reducing conditions zinc is bound to the reactive cysteines and the protein is inactive.

The protein resides in the cytoplasm. In terms of biological role, redox regulated molecular chaperone. Protects both thermally unfolding and oxidatively damaged proteins from irreversible aggregation. Plays an important role in the bacterial defense system toward oxidative stress. This chain is 33 kDa chaperonin, found in Nostoc punctiforme (strain ATCC 29133 / PCC 73102).